The primary structure comprises 252 residues: Uridylate kinase (252 aa).

Lysine 27–glycine 30 lines the ATP pocket. Glycine 68 provides a ligand contact to UMP. Residues glycine 69 and arginine 73 each coordinate ATP. UMP-binding positions include aspartate 88 and methionine 149–threonine 156. Residues tyrosine 182 and aspartate 185 each contribute to the ATP site.

The protein belongs to the UMP kinase family. As to quaternary structure, homohexamer.

Its subcellular location is the cytoplasm. The catalysed reaction is UMP + ATP = UDP + ADP. The protein operates within pyrimidine metabolism; CTP biosynthesis via de novo pathway; UDP from UMP (UMPK route): step 1/1. With respect to regulation, inhibited by UTP. Its function is as follows. Catalyzes the reversible phosphorylation of UMP to UDP. This Mycobacterium sp. (strain JLS) protein is Uridylate kinase.